The sequence spans 170 residues: Methanogen homoaconitase small subunit (170 aa).

Residues 24–27 carry the YLRT motif; it reads YLRT.

The protein belongs to the LeuD family. LeuD type 2 subfamily. In terms of assembly, heterotetramer of 2 HacA and 2 HacB proteins. Cannot form a complex with LeuC.

The enzyme catalyses (2R)-homocitrate = (2R,3S)-homoisocitrate. The catalysed reaction is (2R)-homocitrate = cis-homoaconitate + H2O. It catalyses the reaction (2R,3S)-homoisocitrate = cis-homoaconitate + H2O. It carries out the reaction cis-(homo)2aconitate + H2O = (2R,3S)-iso(homo)2citrate. The enzyme catalyses cis-(homo)3aconitate + H2O = (2R,3S)-iso(homo)3citrate. The catalysed reaction is (R)-malate = maleate + H2O. It catalyses the reaction cis-aconitate + H2O = D-threo-isocitrate. Its pathway is organic acid metabolism; 2-oxosuberate biosynthesis. Functionally, component of a hydro-lyase with broad substrate specificity for cis-unsaturated tricarboxylic acids. Catalyzes both the reversible dehydration of (R)-homocitrate ((R)-2-hydroxybutane-1,2,4-tricarboxylate) to produce cis-homoaconitate ((Z)-but-1-ene-1,2,4-tricarboxylate), and its hydration to homoisocitrate ((1R,2S)-1-hydroxybutane-1,2,4-tricarboxylate). Is also able to hydrate the analogous longer chain substrates cis-homo(2)-aconitate, cis-homo(3)-aconitate, and even the non-physiological cis-homo(4)-aconitate with similar efficiency. These reactions are part of the biosynthesis pathway of coenzyme B. Can also catalyze the hydration of maleate to (R)-malate, and that of cis-aconitate. Cannot catalyze the hydration of citraconate and the dehydration of (S)-homocitrate, citramalate, 2-isopropylmalate, 3-isopropylmalate, citrate or threo-DL-isocitrate. The protein is Methanogen homoaconitase small subunit (hacB) of Methanocaldococcus jannaschii (strain ATCC 43067 / DSM 2661 / JAL-1 / JCM 10045 / NBRC 100440) (Methanococcus jannaschii).